Consider the following 77-residue polypeptide: NADH-ubiquinone oxidoreductase chain 4L (77 aa).

Helical transmembrane passes span 15-37 (WQRL…LKFS) and 44-64 (MFFY…VVMV).

It belongs to the complex I subunit 4L family.

The protein localises to the mitochondrion membrane. It carries out the reaction a ubiquinone + NADH + 5 H(+)(in) = a ubiquinol + NAD(+) + 4 H(+)(out). Core subunit of the mitochondrial membrane respiratory chain NADH dehydrogenase (Complex I) that is believed to belong to the minimal assembly required for catalysis. Complex I functions in the transfer of electrons from NADH to the respiratory chain. The immediate electron acceptor for the enzyme is believed to be ubiquinone. This chain is NADH-ubiquinone oxidoreductase chain 4L, found in Caenorhabditis elegans.